A 184-amino-acid polypeptide reads, in one-letter code: Cysteine proteinase inhibitor 3 (184 aa).

The first 35 residues, 1 to 35 (MLRRRGFCCCSGAPAAAAAALLLLAVAAAAPRAAG), serve as a signal peptide directing secretion. One can recognise a Cystatin domain in the interval 48-134 (GMLAAIRREQ…KAVVEFRHVG (87 aa)). The Secondary area of contact motif lies at 90 to 94 (QVVTG). The segment at 138–165 (SQSATAADDNAGQDTADPTVASRNDLHN) is disordered.

The protein belongs to the cystatin family. Phytocystatin subfamily.

It localises to the secreted. Specific inhibitor of cysteine proteinases. Probably involved in the regulation of endogenous processes and in defense against pests and pathogens. The polypeptide is Cysteine proteinase inhibitor 3 (Oryza sativa subsp. japonica (Rice)).